A 374-amino-acid chain; its full sequence is Methylthioribose-1-phosphate isomerase (374 aa).

Position 2 is an N-acetylserine (Ser-2). The active-site Proton donor is the Asp-253.

Belongs to the eIF-2B alpha/beta/delta subunits family. MtnA subfamily.

The protein resides in the cytoplasm. It localises to the nucleus. The catalysed reaction is 5-(methylsulfanyl)-alpha-D-ribose 1-phosphate = 5-(methylsulfanyl)-D-ribulose 1-phosphate. The protein operates within amino-acid biosynthesis; L-methionine biosynthesis via salvage pathway; L-methionine from S-methyl-5-thio-alpha-D-ribose 1-phosphate: step 1/6. Functionally, catalyzes the interconversion of methylthioribose-1-phosphate (MTR-1-P) into methylthioribulose-1-phosphate (MTRu-1-P). The sequence is that of Methylthioribose-1-phosphate isomerase from Arabidopsis thaliana (Mouse-ear cress).